A 295-amino-acid chain; its full sequence is Protoheme IX farnesyltransferase (295 aa).

The next 9 helical transmembrane spans lie at 27 to 47, 48 to 68, 94 to 114, 117 to 137, 144 to 164, 171 to 191, 216 to 236, 241 to 261, and 272 to 292; these read LVVF…HPFL, ALIS…INMW, SALE…AIAV, ISAA…TIWL, NIVI…AVVT, SFIL…ALSL, KHIL…ALFL, FYLS…ISVI, and MFSY…FCSI.

It belongs to the UbiA prenyltransferase family. Protoheme IX farnesyltransferase subfamily.

It localises to the cell membrane. It catalyses the reaction heme b + (2E,6E)-farnesyl diphosphate + H2O = Fe(II)-heme o + diphosphate. The protein operates within porphyrin-containing compound metabolism; heme O biosynthesis; heme O from protoheme: step 1/1. In terms of biological role, converts heme B (protoheme IX) to heme O by substitution of the vinyl group on carbon 2 of heme B porphyrin ring with a hydroxyethyl farnesyl side group. The sequence is that of Protoheme IX farnesyltransferase from Wolbachia pipientis subsp. Culex pipiens (strain wPip).